The primary structure comprises 894 residues: Alanine--tRNA ligase (894 aa).

Residues H569, H573, C683, and H687 each contribute to the Zn(2+) site.

This sequence belongs to the class-II aminoacyl-tRNA synthetase family. Zn(2+) is required as a cofactor.

The protein localises to the cytoplasm. The enzyme catalyses tRNA(Ala) + L-alanine + ATP = L-alanyl-tRNA(Ala) + AMP + diphosphate. Its function is as follows. Catalyzes the attachment of alanine to tRNA(Ala) in a two-step reaction: alanine is first activated by ATP to form Ala-AMP and then transferred to the acceptor end of tRNA(Ala). Also edits incorrectly charged Ser-tRNA(Ala) and Gly-tRNA(Ala) via its editing domain. The sequence is that of Alanine--tRNA ligase from Chloroflexus aurantiacus (strain ATCC 29366 / DSM 635 / J-10-fl).